Reading from the N-terminus, the 65-residue chain is Large ribosomal subunit protein uL29 (65 aa).

This sequence belongs to the universal ribosomal protein uL29 family.

This chain is Large ribosomal subunit protein uL29 (rpmC), found in Xylella fastidiosa (strain 9a5c).